The sequence spans 187 residues: Calmodulin-like protein 30 (187 aa).

The disordered stretch occupies residues 21-47 (KPSRMFSRDRQSSGLSSPGPGGFSQPS). The span at 32–47 (SSGLSSPGPGGFSQPS) shows a compositional bias: low complexity. EF-hand domains are found at residues 46-81 (PSVNEMRRVFSRFDLDKDGKISQTEYKVVLRALGQE), 82-117 (RAIEDVPKIFKAVDLDGDGFIDFREFIDAYKRSGGI), 129-152 (FDLNGDGKISAEEVMSVLWKLGER), and 153-187 (CSLEDCNRMVRAVDADGDGLVNMEEFIKMMSSNNV). Residues Asp59, Asp61, Asp63, Lys65, Glu70, Asp95, Asp97, Asp99, Glu106, Asp130, Asn132, Asp134, Lys136, Glu141, Asp166, Asp168, Asp170, and Glu177 each coordinate Ca(2+).

This sequence belongs to the calmodulin family.

Potential calcium sensor. The protein is Calmodulin-like protein 30 of Arabidopsis thaliana (Mouse-ear cress).